The sequence spans 371 residues: Queuine tRNA-ribosyltransferase (371 aa).

Residue aspartate 93 is the Proton acceptor of the active site. Substrate is bound by residues 93–97, aspartate 147, glutamine 191, and glycine 218; that span reads DSGGF. Positions 249 to 255 are RNA binding; the sequence is GVGTVVD. Residue aspartate 268 is the Nucleophile of the active site. Residues 273–277 form an RNA binding; important for wobble base 34 recognition region; it reads TRNAR. Zn(2+) contacts are provided by cysteine 306, cysteine 308, cysteine 311, and histidine 337.

It belongs to the queuine tRNA-ribosyltransferase family. As to quaternary structure, homodimer. Within each dimer, one monomer is responsible for RNA recognition and catalysis, while the other monomer binds to the replacement base PreQ1. Zn(2+) is required as a cofactor.

The catalysed reaction is 7-aminomethyl-7-carbaguanine + guanosine(34) in tRNA = 7-aminomethyl-7-carbaguanosine(34) in tRNA + guanine. Its pathway is tRNA modification; tRNA-queuosine biosynthesis. Catalyzes the base-exchange of a guanine (G) residue with the queuine precursor 7-aminomethyl-7-deazaguanine (PreQ1) at position 34 (anticodon wobble position) in tRNAs with GU(N) anticodons (tRNA-Asp, -Asn, -His and -Tyr). Catalysis occurs through a double-displacement mechanism. The nucleophile active site attacks the C1' of nucleotide 34 to detach the guanine base from the RNA, forming a covalent enzyme-RNA intermediate. The proton acceptor active site deprotonates the incoming PreQ1, allowing a nucleophilic attack on the C1' of the ribose to form the product. After dissociation, two additional enzymatic reactions on the tRNA convert PreQ1 to queuine (Q), resulting in the hypermodified nucleoside queuosine (7-(((4,5-cis-dihydroxy-2-cyclopenten-1-yl)amino)methyl)-7-deazaguanosine). The polypeptide is Queuine tRNA-ribosyltransferase (Leptospira biflexa serovar Patoc (strain Patoc 1 / Ames)).